The sequence spans 272 residues: Type II secretion system protein C (272 aa).

Topologically, residues 1 to 16 (MNISKLPPLSPSVIRR) are cytoplasmic. Residues 17–35 (ILFYLLMLLFCQQLAMIFW) traverse the membrane as a helical segment. Topologically, residues 36 to 272 (RIGLPDNAPV…DIYMEFGGDE (237 aa)) are periplasmic.

It belongs to the GSP C family.

It is found in the cell inner membrane. Its function is as follows. Involved in a type II secretion system (T2SS, formerly general secretion pathway, GSP) for the export of proteins. Required for the translocation of the multiple pectic enzymes. This Dickeya dadantii (strain 3937) (Erwinia chrysanthemi (strain 3937)) protein is Type II secretion system protein C (outC).